A 435-amino-acid chain; its full sequence is Probable glycine dehydrogenase (decarboxylating) subunit 1 (435 aa).

The protein belongs to the GcvP family. N-terminal subunit subfamily. In terms of assembly, the glycine cleavage system is composed of four proteins: P, T, L and H. In this organism, the P 'protein' is a heterodimer of two subunits.

It carries out the reaction N(6)-[(R)-lipoyl]-L-lysyl-[glycine-cleavage complex H protein] + glycine + H(+) = N(6)-[(R)-S(8)-aminomethyldihydrolipoyl]-L-lysyl-[glycine-cleavage complex H protein] + CO2. In terms of biological role, the glycine cleavage system catalyzes the degradation of glycine. The P protein binds the alpha-amino group of glycine through its pyridoxal phosphate cofactor; CO(2) is released and the remaining methylamine moiety is then transferred to the lipoamide cofactor of the H protein. The protein is Probable glycine dehydrogenase (decarboxylating) subunit 1 of Coprothermobacter proteolyticus (strain ATCC 35245 / DSM 5265 / OCM 4 / BT).